Reading from the N-terminus, the 523-residue chain is Leghemoglobin reductase (523 aa).

Residues 1–30 (MAMASLARRKAYAVVSSSRSSVFLTSLRGF) constitute a mitochondrion transit peptide. FAD contacts are provided by residues 66–75 (EKRGTLGGTC), Lys84, Gly148, and 177–179 (TGS). A disulfide bridge connects residues Cys75 and Cys80. NAD(+) is bound by residues 214-221 (GAGYIGLE), Glu237, Val271, and Gly306. FAD is bound by residues Asp347 and 353–356 (MLAH). The active-site Proton acceptor is the His479.

It belongs to the class-I pyridine nucleotide-disulfide oxidoreductase family. In terms of assembly, homodimer. FAD serves as cofactor.

Its subcellular location is the mitochondrion. It carries out the reaction 2 Fe(III)-[leghemoglobin] + NADH = 2 Fe(II)-[leghemoglobin] + NAD(+) + H(+). It catalyses the reaction 2 Fe(III)-[leghemoglobin] + NADPH = 2 Fe(II)-[leghemoglobin] + NADP(+) + H(+). Its function is as follows. Reduces ferric leghemoglobin (Lb) to ferrous Lb. This Vigna unguiculata (Cowpea) protein is Leghemoglobin reductase (FLBR).